The chain runs to 395 residues: Protein PIN-LIKES 7 (395 aa).

Topologically, residues 1–8 (MGFLELLE) are lumenal. A helical membrane pass occupies residues 9 to 29 (VASMPIVQVLLISVLGAFLAT). The Cytoplasmic portion of the chain corresponds to 30-45 (DYCSLLSADTRRSVNK). Residues 46–66 (LVFVVFTPCIMFANLAETVTL) traverse the membrane as a helical segment. Topologically, residues 67-73 (QDIISWW) are lumenal. The chain crosses the membrane as a helical span at residues 74–94 (FMPINVGITFLVGGILGWLVV). At 95–106 (KLLNPKPQLHGL) the chain is on the cytoplasmic side. Residues 107 to 127 (IIATCASGNMGNLMLILVPAI) traverse the membrane as a helical segment. The Lumenal segment spans residues 128–142 (CDEEGSPFGNRSVCR). A helical membrane pass occupies residues 143–163 (SIGLSYASFSMALGGFYIWTY). The Cytoplasmic portion of the chain corresponds to 164 to 232 (SYQLVRSSAT…KDLLHQILEE (69 aa)). A helical transmembrane segment spans residues 233-253 (LFAPPTIGAILGFVFGATNWL). Residues 254-272 (RNLIIGENAPLRVIQDSVK) are Lumenal-facing. A helical membrane pass occupies residues 273-293 (LLGEGTIPCITLILGGNLIQG). Over 294–302 (LRSSAVKKS) the chain is Cytoplasmic. The helical transmembrane segment at 303–323 (VIVGVIIVRYILLPVVGVGVV) threads the bilayer. Over 324–340 (QLAGNLGYLPPDPLFRY) the chain is Lumenal. The chain crosses the membrane as a helical span at residues 341-361 (VLMLQFALPPAMNISTMAQLF). The Cytoplasmic segment spans residues 362–369 (DVAQDECS). Residues 370–390 (VIFLWTYLVASLALTVWSTIF) traverse the membrane as a helical segment. Residues 391–395 (LSILS) lie on the Lumenal side of the membrane.

Belongs to the auxin efflux carrier (TC 2.A.69.2) family. In terms of tissue distribution, expressed in seedlings, rosette and cauline leaves, stems and flowers.

The protein localises to the endoplasmic reticulum membrane. Its function is as follows. Involved in cellular auxin homeostasis by regulating auxin metabolism. Regulates intracellular auxin accumulation at the endoplasmic reticulum and thus auxin availability for nuclear auxin signaling. The protein is Protein PIN-LIKES 7 of Arabidopsis thaliana (Mouse-ear cress).